Here is a 367-residue protein sequence, read N- to C-terminus: UDP-N-acetylglucosamine--N-acetylmuramyl-(pentapeptide) pyrophosphoryl-undecaprenol N-acetylglucosamine transferase (367 aa).

Residues 15-17 (TGG), Asn-127, Arg-163, Ser-191, Ile-249, and Gln-294 each bind UDP-N-acetyl-alpha-D-glucosamine.

Belongs to the glycosyltransferase 28 family. MurG subfamily.

The protein resides in the cell inner membrane. It catalyses the reaction di-trans,octa-cis-undecaprenyl diphospho-N-acetyl-alpha-D-muramoyl-L-alanyl-D-glutamyl-meso-2,6-diaminopimeloyl-D-alanyl-D-alanine + UDP-N-acetyl-alpha-D-glucosamine = di-trans,octa-cis-undecaprenyl diphospho-[N-acetyl-alpha-D-glucosaminyl-(1-&gt;4)]-N-acetyl-alpha-D-muramoyl-L-alanyl-D-glutamyl-meso-2,6-diaminopimeloyl-D-alanyl-D-alanine + UDP + H(+). Its pathway is cell wall biogenesis; peptidoglycan biosynthesis. Its function is as follows. Cell wall formation. Catalyzes the transfer of a GlcNAc subunit on undecaprenyl-pyrophosphoryl-MurNAc-pentapeptide (lipid intermediate I) to form undecaprenyl-pyrophosphoryl-MurNAc-(pentapeptide)GlcNAc (lipid intermediate II). The sequence is that of UDP-N-acetylglucosamine--N-acetylmuramyl-(pentapeptide) pyrophosphoryl-undecaprenol N-acetylglucosamine transferase from Burkholderia vietnamiensis (strain G4 / LMG 22486) (Burkholderia cepacia (strain R1808)).